Here is a 330-residue protein sequence, read N- to C-terminus: Glycerol-3-phosphate dehydrogenase [NAD(P)+] (330 aa).

NADPH-binding residues include Ser14, Phe15, Arg35, and Lys109. Sn-glycerol 3-phosphate is bound by residues Lys109 and Gly137. Ala141 serves as a coordination point for NADPH. Lys192, Asp248, Ser258, Arg259, and Asn260 together coordinate sn-glycerol 3-phosphate. Residue Lys192 is the Proton acceptor of the active site. An NADPH-binding site is contributed by Arg259. NADPH-binding residues include Leu283 and Glu285.

It belongs to the NAD-dependent glycerol-3-phosphate dehydrogenase family.

It localises to the cytoplasm. It catalyses the reaction sn-glycerol 3-phosphate + NAD(+) = dihydroxyacetone phosphate + NADH + H(+). It carries out the reaction sn-glycerol 3-phosphate + NADP(+) = dihydroxyacetone phosphate + NADPH + H(+). It functions in the pathway membrane lipid metabolism; glycerophospholipid metabolism. In terms of biological role, catalyzes the reduction of the glycolytic intermediate dihydroxyacetone phosphate (DHAP) to sn-glycerol 3-phosphate (G3P), the key precursor for phospholipid synthesis. This Rickettsia massiliae (strain Mtu5) protein is Glycerol-3-phosphate dehydrogenase [NAD(P)+].